A 331-amino-acid chain; its full sequence is Ribosomal RNA small subunit methyltransferase H (331 aa).

S-adenosyl-L-methionine-binding positions include 38–40, Asp-56, Phe-83, Asp-100, and Gln-107; that span reads GGY. The interval 287–331 is disordered; the sequence is DEAELAENPRARSARLRVGVRTDAPAGKVDPQALGTPLIPKKGRR.

The protein belongs to the methyltransferase superfamily. RsmH family.

The protein resides in the cytoplasm. The catalysed reaction is cytidine(1402) in 16S rRNA + S-adenosyl-L-methionine = N(4)-methylcytidine(1402) in 16S rRNA + S-adenosyl-L-homocysteine + H(+). In terms of biological role, specifically methylates the N4 position of cytidine in position 1402 (C1402) of 16S rRNA. The sequence is that of Ribosomal RNA small subunit methyltransferase H from Cereibacter sphaeroides (strain ATCC 17023 / DSM 158 / JCM 6121 / CCUG 31486 / LMG 2827 / NBRC 12203 / NCIMB 8253 / ATH 2.4.1.) (Rhodobacter sphaeroides).